Reading from the N-terminus, the 545-residue chain is Chaperonin GroEL 1 (545 aa).

ATP is bound by residues 30–33 (TLGP), lysine 51, 87–91 (DGTTT), glycine 415, and aspartate 495.

Belongs to the chaperonin (HSP60) family. In terms of assembly, forms a cylinder of 14 subunits composed of two heptameric rings stacked back-to-back. Interacts with the co-chaperonin GroES.

Its subcellular location is the cytoplasm. It carries out the reaction ATP + H2O + a folded polypeptide = ADP + phosphate + an unfolded polypeptide.. Functionally, together with its co-chaperonin GroES, plays an essential role in assisting protein folding. The GroEL-GroES system forms a nano-cage that allows encapsulation of the non-native substrate proteins and provides a physical environment optimized to promote and accelerate protein folding. The protein is Chaperonin GroEL 1 of Rhizobium etli (strain ATCC 51251 / DSM 11541 / JCM 21823 / NBRC 15573 / CFN 42).